The primary structure comprises 178 residues: uncharacterized protein (178 aa).

Disordered stretches follow at residues 89-115 and 136-178; these read NEEQGHQRSASHGSTSSATSTPKRLSI and DMPT…EIKA. The segment covering 98-109 has biased composition (low complexity); it reads ASHGSTSSATST. Residues 167–178 are compositionally biased toward acidic residues; the sequence is DSDEEEEEEIKA.

The protein localises to the cytoplasm. It is found in the nucleus. This is an uncharacterized protein from Schizosaccharomyces pombe (strain 972 / ATCC 24843) (Fission yeast).